A 182-amino-acid chain; its full sequence is Interferon gamma 1 (182 aa).

The first 21 residues, 1–21 (MIAQNMTIFFWGVCLLTSGWA), serve as a signal peptide directing secretion. Asparagine 93 carries an N-linked (GlcNAc...) asparagine glycan.

The protein belongs to the type II (or gamma) interferon family. Homodimer. Highly expressed in spleen. Also detected at lower levels in brain, gill, kidney, heart, intestine and muscle. In immune cell populations, has highest expression in peripheral blood leukocytes and splenocytes. Detected in kidney-derived monocytes, neutrophils, macrophages and leukocytes.

The protein localises to the secreted. Its function is as follows. Cytokine which binds to interferon gamma receptor 1-like (ifngr1l). Has activating effects on primary macrophages and neutrophils. Induces nitric oxide production and phagocytic responses in macrophages. Primes macrophages and neutrophils for production of reactive oxygen intermediates (ROI). Stimulates phosphorylation and nuclear localization of the JAK/STAT signal transducer stat1. Promotes increased expression of a number of genes important for macrophage activity, including the interferon regulatory factors irf1, irf2, irf8 and irf9. In Carassius auratus (Goldfish), this protein is Interferon gamma 1.